A 445-amino-acid polypeptide reads, in one-letter code: Ribosomal protein uS12 methylthiotransferase RimO (445 aa).

Residues 4–119 enclose the MTTase N-terminal domain; sequence IKVALVSLGC…LLESIKVFLK (116 aa). Cysteine 13, cysteine 48, cysteine 82, cysteine 156, cysteine 160, and cysteine 163 together coordinate [4Fe-4S] cluster. The Radical SAM core domain occupies 142–372; sequence TTPTYTAYVR…MILQQSISKD (231 aa). Residues 375–441 form the TRAM domain; that stretch reads KEKIGKIYEV…EYDLIGVVYN (67 aa).

It belongs to the methylthiotransferase family. RimO subfamily. Requires [4Fe-4S] cluster as cofactor.

It is found in the cytoplasm. It catalyses the reaction L-aspartate(89)-[ribosomal protein uS12]-hydrogen + (sulfur carrier)-SH + AH2 + 2 S-adenosyl-L-methionine = 3-methylsulfanyl-L-aspartate(89)-[ribosomal protein uS12]-hydrogen + (sulfur carrier)-H + 5'-deoxyadenosine + L-methionine + A + S-adenosyl-L-homocysteine + 2 H(+). Functionally, catalyzes the methylthiolation of an aspartic acid residue of ribosomal protein uS12. The chain is Ribosomal protein uS12 methylthiotransferase RimO from Clostridium botulinum (strain Okra / Type B1).